The following is a 126-amino-acid chain: S-adenosylmethionine decarboxylase proenzyme (126 aa).

Serine 63 serves as the catalytic Schiff-base intermediate with substrate; via pyruvic acid. Residue serine 63 is modified to Pyruvic acid (Ser); by autocatalysis. Residue histidine 68 is the Proton acceptor; for processing activity of the active site. The active-site Proton donor; for catalytic activity is the cysteine 83.

The protein belongs to the prokaryotic AdoMetDC family. Type 1 subfamily. As to quaternary structure, heterotetramer of two alpha and two beta chains arranged as a dimer of alpha/beta heterodimers. Pyruvate serves as cofactor. Post-translationally, is synthesized initially as an inactive proenzyme. Formation of the active enzyme involves a self-maturation process in which the active site pyruvoyl group is generated from an internal serine residue via an autocatalytic post-translational modification. Two non-identical subunits are generated from the proenzyme in this reaction, and the pyruvate is formed at the N-terminus of the alpha chain, which is derived from the carboxyl end of the proenzyme. The post-translation cleavage follows an unusual pathway, termed non-hydrolytic serinolysis, in which the side chain hydroxyl group of the serine supplies its oxygen atom to form the C-terminus of the beta chain, while the remainder of the serine residue undergoes an oxidative deamination to produce ammonia and the pyruvoyl group blocking the N-terminus of the alpha chain.

It catalyses the reaction S-adenosyl-L-methionine + H(+) = S-adenosyl 3-(methylsulfanyl)propylamine + CO2. The protein operates within amine and polyamine biosynthesis; S-adenosylmethioninamine biosynthesis; S-adenosylmethioninamine from S-adenosyl-L-methionine: step 1/1. In terms of biological role, catalyzes the decarboxylation of S-adenosylmethionine to S-adenosylmethioninamine (dcAdoMet), the propylamine donor required for the synthesis of the polyamines spermine and spermidine from the diamine putrescine. The polypeptide is S-adenosylmethionine decarboxylase proenzyme (Bacillus velezensis (strain DSM 23117 / BGSC 10A6 / LMG 26770 / FZB42) (Bacillus amyloliquefaciens subsp. plantarum)).